Here is a 494-residue protein sequence, read N- to C-terminus: Arp2/3 complex-activating protein rickA (494 aa).

The interval 312 to 494 (PLENNIPPPP…RNSQKPSFVR (183 aa)) is disordered. Residues 317–357 (IPPPPPPPPPLPDNNIPPPPPPPPPLPDNNIPPPPPPPPMA) show a composition bias toward pro residues. The 18-residue stretch at 383–400 (DTSDLMREIAGPKKLKKV) folds into the WH2 domain. Residues 421–454 (VNKPSGLESIFARRVAIEMSDSSSSESDSGNWSD) form a central and acidic domains region. Over residues 440-456 (SDSSSSESDSGNWSDVS) the composition is skewed to low complexity. Residues 477–494 (THAQKINNRNSQKPSFVR) are compositionally biased toward polar residues.

The protein localises to the cell surface. Functionally, recruits and activates the Arp2/3 complex, which in turn leads to actin polymerization, promoting Rickettsia motility during infection. This Rickettsia rickettsii protein is Arp2/3 complex-activating protein rickA (rickA).